Here is an 82-residue protein sequence, read N- to C-terminus: Small ribosomal subunit protein eS21 (82 aa).

Belongs to the eukaryotic ribosomal protein eS21 family.

This is Small ribosomal subunit protein eS21 (RPS21) from Oryza sativa subsp. japonica (Rice).